We begin with the raw amino-acid sequence, 368 residues long: Aspartate-semialdehyde dehydrogenase (368 aa).

NADP(+) is bound by residues 10 to 13 (RGMV), 37 to 38 (TS), and Gln-74. Arg-103 is a phosphate binding site. The Acyl-thioester intermediate role is filled by Cys-136. Cys-136 carries the post-translational modification S-cysteinyl cysteine; in inhibited form. Position 163 (Gln-163) interacts with substrate. Residues 166–167 (SG) and Pro-194 contribute to the NADP(+) site. Substrate is bound at residue Glu-242. Residue Lys-245 coordinates phosphate. Arg-268 contacts substrate. The active-site Proton acceptor is the His-275. Gln-351 contributes to the NADP(+) binding site.

It belongs to the aspartate-semialdehyde dehydrogenase family. As to quaternary structure, homodimer.

It carries out the reaction L-aspartate 4-semialdehyde + phosphate + NADP(+) = 4-phospho-L-aspartate + NADPH + H(+). It participates in amino-acid biosynthesis; L-lysine biosynthesis via DAP pathway; (S)-tetrahydrodipicolinate from L-aspartate: step 2/4. It functions in the pathway amino-acid biosynthesis; L-methionine biosynthesis via de novo pathway; L-homoserine from L-aspartate: step 2/3. The protein operates within amino-acid biosynthesis; L-threonine biosynthesis; L-threonine from L-aspartate: step 2/5. Its function is as follows. Catalyzes the NADPH-dependent formation of L-aspartate-semialdehyde (L-ASA) by the reductive dephosphorylation of L-aspartyl-4-phosphate. The chain is Aspartate-semialdehyde dehydrogenase from Salmonella typhi.